Reading from the N-terminus, the 308-residue chain is Methionyl-tRNA formyltransferase (308 aa).

109-112 (SLLP) serves as a coordination point for (6S)-5,6,7,8-tetrahydrofolate.

This sequence belongs to the Fmt family.

The enzyme catalyses L-methionyl-tRNA(fMet) + (6R)-10-formyltetrahydrofolate = N-formyl-L-methionyl-tRNA(fMet) + (6S)-5,6,7,8-tetrahydrofolate + H(+). In terms of biological role, attaches a formyl group to the free amino group of methionyl-tRNA(fMet). The formyl group appears to play a dual role in the initiator identity of N-formylmethionyl-tRNA by promoting its recognition by IF2 and preventing the misappropriation of this tRNA by the elongation apparatus. The polypeptide is Methionyl-tRNA formyltransferase (Methylococcus capsulatus (strain ATCC 33009 / NCIMB 11132 / Bath)).